The chain runs to 499 residues: MLLVLLILAASCRSALPREPTIQCGSETGPSPEWMVQHTLTPGDLRDLQVELVKTSVAAEEFSILMNISWILRADASIRLLKATKICVSGKNNMNSYSCVRCNYTEAFQSQTRPSGGKWTFSYVGFPVELSTLYLISAHNIPNANMNEDSPSLSVNFTSPGCLNHVMKYKKQCTEAGSLWDPDITACKKNEKMVEVNFTTNPLGNRYTILIQRDTTLGFSRVLENKLMRTSVAIPVTEESEGAVVQLTPYLHTCGNDCIRREGTVVLCSETSAPIPPDDNRRMLGGWLPLFLVLLVAVWVLAAGIYLTWRQGRSTKTSFPISTMLLPLIKVLVVYPSEICFHHTVCRFTDFLQNYCRSEVILEKWQKKKIAEMGPVQWLTTQKQAADKVVFLLPSDVPTLCDSACGHNEGSARENSQDLFPLAFNLFCSDFSSQTHLHKYLVVYLGGADLKGDYNALSVCPQYHLMKDATAFHTELLKATQSMSVKKRSQACHDSCSPL.

The signal sequence occupies residues 1-17 (MLLVLLILAASCRSALP). Residues 18–286 (REPTIQCGSE…PDDNRRMLGG (269 aa)) are Extracellular-facing. Asn-67, Asn-103, Asn-156, and Asn-197 each carry an N-linked (GlcNAc...) asparagine glycan. A helical membrane pass occupies residues 287–307 (WLPLFLVLLVAVWVLAAGIYL). The Cytoplasmic segment spans residues 308-499 (TWRQGRSTKT…QACHDSCSPL (192 aa)). The SEFIR domain occupies 328-474 (LIKVLVVYPS…LMKDATAFHT (147 aa)).

In terms of assembly, interacts with DAZAP2. Interacts with TRAF3IP2. In terms of tissue distribution, liver and testis. Expressed at lower level in kidney and lung. Expressed in selected T-cell, B-cell and myeloid cell lines.

It localises to the cell membrane. Its subcellular location is the secreted. Receptor for the pro-inflammatory cytokines IL17B and IL17E. May play a role in controlling the growth and/or differentiation of hematopoietic cells. The protein is Interleukin-17 receptor B (Il17rb) of Mus musculus (Mouse).